Here is a 308-residue protein sequence, read N- to C-terminus: MALEAQPSPSPSPRRSPEAAAGGAGAPGGSAGDADAQARRATSGRPRRRGPQPRRSPPPPFPRTPRPSSAARTGKPVSPPPPPRKKPQFQPPPQPPRAWDPSPPPPPPAPAAPVLVPPPAPAPRPAPAPAPRVPARAVEHDHRVVPDILLRKRPTAVLQRTALVARVAAALLCLAALAVLAADSRKGFALDSYSNYSQLRYSEAVNVIGFVYSVLQFFVLADLMRRNKHLNPRRKGDYFDFFMDQVLAYLLISSSSSATARVGDWIDNWGSDPFPKMANSSIAISFMAFLVFAISALISAYNLFRRDI.

The disordered stretch occupies residues 1–135 (MALEAQPSPS…APAPAPRVPA (135 aa)). Topologically, residues 1–161 (MALEAQPSPS…KRPTAVLQRT (161 aa)) are cytoplasmic. Over residues 22–31 (GGAGAPGGSA) the composition is skewed to gly residues. The segment covering 32–44 (GDADAQARRATSG) has biased composition (low complexity). 2 stretches are compositionally biased toward pro residues: residues 54-65 (RRSPPPPFPRTP) and 89-132 (FQPP…PAPR). Residues 162-182 (ALVARVAAALLCLAALAVLAA) form a helical membrane-spanning segment. The Extracellular portion of the chain corresponds to 183–203 (DSRKGFALDSYSNYSQLRYSE). An N-linked (GlcNAc...) asparagine glycan is attached at asparagine 195. Residues 204-224 (AVNVIGFVYSVLQFFVLADLM) traverse the membrane as a helical segment. Residues 225-240 (RRNKHLNPRRKGDYFD) lie on the Cytoplasmic side of the membrane. The helical transmembrane segment at 241-262 (FFMDQVLAYLLISSSSSATARV) threads the bilayer. The Extracellular portion of the chain corresponds to 263–280 (GDWIDNWGSDPFPKMANS). The N-linked (GlcNAc...) asparagine glycan is linked to asparagine 279. The chain crosses the membrane as a helical span at residues 281–301 (SIAISFMAFLVFAISALISAY). The Cytoplasmic segment spans residues 302–308 (NLFRRDI).

The protein belongs to the Casparian strip membrane proteins (CASP) family. In terms of assembly, homodimer and heterodimers.

The protein localises to the cell membrane. The chain is CASP-like protein 4A2 from Oryza sativa subsp. japonica (Rice).